The chain runs to 234 residues: Leucyl/phenylalanyl-tRNA--protein transferase (234 aa).

It belongs to the L/F-transferase family.

Its subcellular location is the cytoplasm. It catalyses the reaction N-terminal L-lysyl-[protein] + L-leucyl-tRNA(Leu) = N-terminal L-leucyl-L-lysyl-[protein] + tRNA(Leu) + H(+). It carries out the reaction N-terminal L-arginyl-[protein] + L-leucyl-tRNA(Leu) = N-terminal L-leucyl-L-arginyl-[protein] + tRNA(Leu) + H(+). The catalysed reaction is L-phenylalanyl-tRNA(Phe) + an N-terminal L-alpha-aminoacyl-[protein] = an N-terminal L-phenylalanyl-L-alpha-aminoacyl-[protein] + tRNA(Phe). Its function is as follows. Functions in the N-end rule pathway of protein degradation where it conjugates Leu, Phe and, less efficiently, Met from aminoacyl-tRNAs to the N-termini of proteins containing an N-terminal arginine or lysine. The sequence is that of Leucyl/phenylalanyl-tRNA--protein transferase from Shigella sonnei (strain Ss046).